Consider the following 135-residue polypeptide: MSSSNNSVVYWGTGRRKTSVARVRLVPGTGTITINGRPGDHYLNFNPAYLAAVKAPLQTLGLNEQYDVLVNVHGGGLTGQADAIKQGAARALCELSADNRKPLKTEGHLSRDPRAKERRKYGLKKARKAPQFSKR.

Residues 96 to 135 (SADNRKPLKTEGHLSRDPRAKERRKYGLKKARKAPQFSKR) form a disordered region. The segment covering 97-115 (ADNRKPLKTEGHLSRDPRA) has biased composition (basic and acidic residues). Over residues 116 to 135 (KERRKYGLKKARKAPQFSKR) the composition is skewed to basic residues.

This sequence belongs to the universal ribosomal protein uS9 family.

In Prochlorococcus marinus (strain MIT 9303), this protein is Small ribosomal subunit protein uS9.